The chain runs to 143 residues: Nucleoside diphosphate kinase (143 aa).

Residues lysine 11, phenylalanine 59, arginine 87, threonine 93, arginine 104, and asparagine 114 each coordinate ATP. The active-site Pros-phosphohistidine intermediate is the histidine 117.

Belongs to the NDK family. In terms of assembly, homotetramer. The cofactor is Mg(2+).

It localises to the cytoplasm. The enzyme catalyses a 2'-deoxyribonucleoside 5'-diphosphate + ATP = a 2'-deoxyribonucleoside 5'-triphosphate + ADP. It carries out the reaction a ribonucleoside 5'-diphosphate + ATP = a ribonucleoside 5'-triphosphate + ADP. In terms of biological role, major role in the synthesis of nucleoside triphosphates other than ATP. The ATP gamma phosphate is transferred to the NDP beta phosphate via a ping-pong mechanism, using a phosphorylated active-site intermediate. The polypeptide is Nucleoside diphosphate kinase (Stutzerimonas stutzeri (strain A1501) (Pseudomonas stutzeri)).